The chain runs to 180 residues: tRNA (cytidine(56)-2'-O)-methyltransferase (180 aa).

Residue leucine 85 coordinates S-adenosyl-L-methionine.

This sequence belongs to the aTrm56 family. As to quaternary structure, homodimer.

Its subcellular location is the cytoplasm. It catalyses the reaction cytidine(56) in tRNA + S-adenosyl-L-methionine = 2'-O-methylcytidine(56) in tRNA + S-adenosyl-L-homocysteine + H(+). Its function is as follows. Specifically catalyzes the AdoMet-dependent 2'-O-ribose methylation of cytidine at position 56 in tRNAs. The chain is tRNA (cytidine(56)-2'-O)-methyltransferase from Methanobrevibacter smithii (strain ATCC 35061 / DSM 861 / OCM 144 / PS).